The primary structure comprises 406 residues: Membrane protein UL43 homolog (406 aa).

A run of 10 helical transmembrane segments spans residues 48–68, 71–91, 103–123, 126–146, 162–182, 188–208, 266–286, 299–319, 339–359, and 386–406; these read LFLV…QYHV, AAVN…PTSV, CLQT…CPIS, LPFV…VAAV, IYFY…VILY, YEVL…VDAA, SVIP…SHII, LAVS…AVLY, IAVT…STVA, and VYHV…TYVS.

The protein belongs to the alphaherpesvirinae HHV-1 UL43 family.

It localises to the membrane. The protein is Membrane protein UL43 homolog of Varicella-zoster virus (strain Dumas) (HHV-3).